Consider the following 186-residue polypeptide: UPF0301 protein Swoo_1337 (186 aa).

The protein belongs to the UPF0301 (AlgH) family.

In Shewanella woodyi (strain ATCC 51908 / MS32), this protein is UPF0301 protein Swoo_1337.